A 405-amino-acid polypeptide reads, in one-letter code: uncharacterized protein (405 aa).

This is an uncharacterized protein from Schizosaccharomyces pombe (strain 972 / ATCC 24843) (Fission yeast).